The chain runs to 723 residues: LPS-assembly protein LptD (723 aa).

A signal peptide spans 1–23; it reads MNTLKLCLILYACLVLLPVRVMS.

The protein belongs to the LptD family. In terms of assembly, component of the lipopolysaccharide transport and assembly complex. Interacts with LptE and LptA.

It localises to the cell outer membrane. Functionally, together with LptE, is involved in the assembly of lipopolysaccharide (LPS) at the surface of the outer membrane. The chain is LPS-assembly protein LptD from Nitrosomonas europaea (strain ATCC 19718 / CIP 103999 / KCTC 2705 / NBRC 14298).